The following is a 260-amino-acid chain: Snake venom serine protease 2 (260 aa).

The signal sequence occupies residues 1–18; the sequence is MVLIRVLANLLILQLFYA. Residues 19-24 constitute a propeptide that is removed on maturation; the sequence is QKSSEL. One can recognise a Peptidase S1 domain in the interval 25-251; it reads IIGGDECNIN…HLDWIKSIIA (227 aa). 6 cysteine pairs are disulfide-bonded: Cys31/Cys165, Cys52/Cys68, Cys100/Cys258, Cys144/Cys212, Cys176/Cys191, and Cys202/Cys227. Residues Asn123 and Asn124 are each glycosylated (N-linked (GlcNAc...) asparagine).

Belongs to the peptidase S1 family. Snake venom subfamily. Monomer. Expressed by the venom gland.

The protein localises to the secreted. Snake venom serine protease that may act in the hemostasis system of the prey. This Protobothrops flavoviridis (Habu) protein is Snake venom serine protease 2 (TLF2).